Here is a 325-residue protein sequence, read N- to C-terminus: Beta-ketoacyl-[acyl-carrier-protein] synthase III (325 aa).

Catalysis depends on residues C114 and H252. The ACP-binding stretch occupies residues 253-257 (QANFR). The active site involves N282.

It belongs to the thiolase-like superfamily. FabH family. In terms of assembly, homodimer.

It is found in the cytoplasm. It carries out the reaction malonyl-[ACP] + acetyl-CoA + H(+) = 3-oxobutanoyl-[ACP] + CO2 + CoA. It functions in the pathway lipid metabolism; fatty acid biosynthesis. Functionally, catalyzes the condensation reaction of fatty acid synthesis by the addition to an acyl acceptor of two carbons from malonyl-ACP. Catalyzes the first condensation reaction which initiates fatty acid synthesis and may therefore play a role in governing the total rate of fatty acid production. Possesses both acetoacetyl-ACP synthase and acetyl transacylase activities. Its substrate specificity determines the biosynthesis of branched-chain and/or straight-chain of fatty acids. This is Beta-ketoacyl-[acyl-carrier-protein] synthase III from Novosphingobium aromaticivorans (strain ATCC 700278 / DSM 12444 / CCUG 56034 / CIP 105152 / NBRC 16084 / F199).